The sequence spans 434 residues: Histidinol dehydrogenase (434 aa).

Ser242, Gln264, and His267 together coordinate substrate. Zn(2+) is bound by residues Gln264 and His267. Residues Glu332 and His333 each act as proton acceptor in the active site. The substrate site is built by His333, Asp366, Glu420, and His425. Asp366 is a binding site for Zn(2+). His425 contributes to the Zn(2+) binding site.

It belongs to the histidinol dehydrogenase family. Zn(2+) is required as a cofactor.

The catalysed reaction is L-histidinol + 2 NAD(+) + H2O = L-histidine + 2 NADH + 3 H(+). Its pathway is amino-acid biosynthesis; L-histidine biosynthesis; L-histidine from 5-phospho-alpha-D-ribose 1-diphosphate: step 9/9. Catalyzes the sequential NAD-dependent oxidations of L-histidinol to L-histidinaldehyde and then to L-histidine. The polypeptide is Histidinol dehydrogenase (Desulfotalea psychrophila (strain LSv54 / DSM 12343)).